Here is a 433-residue protein sequence, read N- to C-terminus: Glucoside xylosyltransferase 1 (433 aa).

Topologically, residues 1-6 (MRRFAR) are cytoplasmic. Residues 7–29 (VALLFLGCGVCSLLYGVSQLALS) form a helical; Signal-anchor for type II membrane protein membrane-spanning segment. The Lumenal segment spans residues 30–433 (LEQEAGGARQ…DLSVRRSKGS (404 aa)). A disordered region spans residues 39–64 (QRQARESAAPGGGRQAGSADGGEEGA). N-linked (GlcNAc...) asparagine glycosylation is found at Asn-69, Asn-166, Asn-271, Asn-305, and Asn-380.

Belongs to the glycosyltransferase 8 family.

The protein resides in the membrane. It catalyses the reaction 3-O-(beta-D-glucosyl)-L-seryl-[EGF-like domain protein] + UDP-alpha-D-xylose = 3-O-[alpha-D-xylosyl-(1-&gt;3)-beta-D-glucosyl]-L-seryl-[EGF-like domain protein] + UDP + H(+). Functionally, glycosyltransferase which elongates the O-linked glucose attached to EGF-like repeats in the extracellular domain of Notch proteins by catalyzing the addition of xylose. The sequence is that of Glucoside xylosyltransferase 1 (GXYLT1) from Gallus gallus (Chicken).